The sequence spans 2453 residues: MSSSGYPPNQGAFSTEQSRYPSHSVQYTFPSARHQQEFAVPDYRSSHLEVSQASQLLQQQQQQQLRRRPSLLSEFHPGSDRPQERRSGYEQFHPGPSPVDHDSLESKRPRLEQVSDSHFQRISAAVLPLVHTLPEGLRSSANAKKDPAFGVKHEAPSSPLSGQPCGDDQNASPSKLSKEELIQSMDRVDREIAKVEQQILKLKKKQQQLEEEAAKPPEPEKPVSPPPVEQKHRSIVQIIYDENRKKAEEAHKIFEGLGPKVELPLYNQPSDTKVYHENIKTNQVMRKKLILFFKRRNHARKQREQKICQRYDQLMEAWEKKVDRIENNPRRKAKESKTREYYEKQFPEIRKQREQQERFQRVGQRGAGLSATIARSEHEISEIIDGLSEQENNEKQMRQLSVIPPMMFDAEQRRVKFINMNGLMEDPMKVYKDRQFMNVWTDHEKEIFKDKFIQHPKNFGLIASYLERKSVPDCVLYYYLTKKNENYKALVRRNYGKRRGRNQQIARPSQEEKVEEKEEDKAEKTEKKEEEKKDDEEKDDKEDSKETTKEKDRTEATAEEPEEREQVTPRGRKTANSQGRGKGRVTRSMTSEAAAANAAAAATEEPPPPLPPPPEPISTEPVETSRWTEEEMEVAKKGLVEHGRNWAAIAKMVGTKSEAQCKNFYFNYKRRHNLDNLLQQHKQKASRKPREERDVSQCESVASTVSAQEDEDIEASNEEENPEDSEGAENSSDTESAPSPSPVEAAKSSEDSSENAASRGNTEPVAELEATTDPAPCASPSSAVPTTKPAERESVEAQVTDSASAETAEPMDVDHEECGAEGSSVLDPPAPTKADSVDPEMQVPENTASKGEGDAKERDLESTSEKTEARDEDVVVAEQIERPEPQSDDDSSATCSADEGVDGEPERQRVFPMDAKPSLLTPPGSILISSPIKPNLLDLPQLQHRAAVIPPMVSCTPCNIPIGTPVSGYALYQRHIKAMHESALLEEQRQRQEQVDLECRSSTSPCSTSKSPNREWEVLQPAPHQVITNLPEGVRLPTTRPTRPPPPLIPSSKTTVASEKPSFIMGGSISQGTPGTYLSSHNQAYPQEAPKPSVGSISLGLPRQQESTKAAPLTYIKQEEFSPRSQNSQPEGLLVRAQHEGVVRGTAGAVQEGSITRGTPASKISVETISSLRGSITQGTPALPQAGIPTEALVKGPVSRMPIEESSPEKVREEAASKGHVIYEGKSGHILSYDNIKNAREGTRSPRTAHEMSLKRSYEAVEGSIKQGMSMRESPVSAPLEGLICRALPRGSPHSDLKERTVLSGSIMQGTPRATAESFEDGLKYPKQIKRESPPIRAFEGAITKGKPYDGITTIKEMGRSIHEIPRQDILTQESRKTPEVVQSTRPIIEGSISQGTPIKFDNNSGQSAIKHNVKSLITGPSKLPRGMLEIVPENIKVVERGKYEDVKAGEPVRARHTSVVSSGPSVLRSTLHEAPKAQLSPGLYDDSSARRTPVSYQNTISRGSPMMNRTSDVSSSKSASHERKSTLTPTQRESIPAKSPVPGVDPIVSHSPFDPHHRSSAAGEVYRSHLPTHLDPAMPFHRALDPAAAYLLQRQLSPTPGYPSQYQLYAMENTRQTILNDYITSQQMQVNLRPDVTRGLSPREQPLGLPYPATRGIIDLTNMPPTILVPHAGGTSTPPMDRITYIPGTQVTFPPRPYNAASLSPGHPTHLAAAASAEREREREREKERERERERERERERERIAAAPADLYLRPGSEQPGRPGSHGYVRSPSPSVRTQETILQQRPSVFQGTNGTSVITPLDPTAQLRIMPLPSGGPSISQGLPASRYNTAADALAALVDAAASAPQMDVSKTKESKHEAARLEENLRSRSAAVSEQQQLEQKNLEVEKRSVQCVCTSSALPSGKAQPHASVVYSEAGKDKGPPPKSRYEEELRTRGKTTITAANFIDVIITRQIASDKDARERGSQSSDSSSSLSSHRYETASDAIEVISPASSPAPPQEKPQAYQPDMVKANQAENESTRQYEGPLHHYRSQQESPSPQQQPPLPPSSQSEGMGQVPRTHRLITLADHICQIITQDFARNQVPSQASTSTFQTSPSALSSTPVRTKTSSRYSPESQSQTVLHPRPGPRVSPENLVDKSRGSRPGKSPERSHIPSEPYEPISPPQGPAVHEKQDSMLLLSQRGVDPAEQRSDSRSPGSISYLPSFFTKLESTSPMVKSKKQEIFRKLNSSGGGDSDMAAAQPGTEIFNLPAVTTSGAVSSRSHSFADPASNLGLEDIIRKALMGSFDDKVEDHGVVMSHPVGIMPGSASTSVVTSSEARRDEGEPSPHAGVCKPKLINKSNSRKSKSPIPGQSYLGTERPSSVSSVHSEGDYHRQTPGWAWEDRPSSTGSTQFPYNPLTIRMLSSTPPTQIACAPSAITQAAPHQQNRIWEREPAPLLSAQYETLSDSDD.

Over residues 1 to 29 (MSSSGYPPNQGAFSTEQSRYPSHSVQYTF) the composition is skewed to polar residues. Disordered regions lie at residues 1 to 116 (MSSS…QVSD), 147 to 177 (PAFG…SKLS), and 206 to 231 (QQQL…VEQK). Residues 1–373 (MSSSGYPPNQ…QRGAGLSATI (373 aa)) are interaction with ZBTB33 and HEXIM1. Residues 51–64 (SQASQLLQQQQQQQ) show a composition bias toward low complexity. 2 stretches are compositionally biased toward basic and acidic residues: residues 77 to 88 (PGSDRPQERRSG) and 99 to 116 (VDHD…QVSD). The residue at position 172 (Ser172) is a Phosphoserine. Residues 174-216 (SKLSKEELIQSMDRVDREIAKVEQQILKLKKKQQQLEEEAAKP) are a coiled coil. The span at 212–221 (EAAKPPEPEK) shows a compositional bias: basic and acidic residues. At Ser224 the chain carries Phosphoserine. The interval 254–312 (FEGLGPKVELPLYNQPSDTKVYHENIKTNQVMRKKLILFFKRRNHARKQREQKICQRYD) is interaction with SIN3A/B. A coiled-coil region spans residues 299–328 (ARKQREQKICQRYDQLMEAWEKKVDRIENN). In terms of domain architecture, SANT 1 spans 435–486 (QFMNVWTDHEKEIFKDKFIQHPKNFGLIASYLERKSVPDCVLYYYLTKKNEN). Disordered regions lie at residues 497-631 (KRRG…TEEE) and 677-908 (LLQQ…PERQ). The stretch at 501–550 (RNQQIARPSQEEKVEEKEEDKAEKTEKKEEEKKDDEEKDDKEDSKETTKE) forms a coiled coil. Basic and acidic residues-rich tracts occupy residues 509–531 (SQEE…KEEE) and 541–556 (KEDS…RTEA). The segment covering 592-604 (EAAAANAAAAATE) has biased composition (low complexity). Over residues 605–616 (EPPPPLPPPPEP) the composition is skewed to pro residues. Positions 622 to 673 (VETSRWTEEEMEVAKKGLVEHGRNWAAIAKMVGTKSEAQCKNFYFNYKRRHN) constitute an SANT 2 domain. Over residues 697 to 707 (QCESVASTVSA) the composition is skewed to polar residues. A compositionally biased stretch (acidic residues) spans 708 to 727 (QEDEDIEASNEEENPEDSEG). A compositionally biased stretch (low complexity) spans 771–787 (TTDPAPCASPSSAVPTT). Residues 851–885 (GEGDAKERDLESTSEKTEARDEDVVVAEQIERPEP) are compositionally biased toward basic and acidic residues. Ser1011 is subject to Phosphoserine. The tract at residues 1034–1058 (VRLPTTRPTRPPPPLIPSSKTTVAS) is disordered. Residue Lys1117 forms a Glycyl lysine isopeptide (Lys-Gly) (interchain with G-Cter in SUMO1); alternate linkage. Lys1117 is covalently cross-linked (Glycyl lysine isopeptide (Lys-Gly) (interchain with G-Cter in SUMO2); alternate). Ser1122 carries the post-translational modification Phosphoserine. Lys1195 participates in a covalent cross-link: Glycyl lysine isopeptide (Lys-Gly) (interchain with G-Cter in SUMO2). 5 positions are modified to phosphoserine: Ser1206, Ser1207, Ser1274, Ser1292, and Ser1333. N6-acetyllysine is present on Lys1347. Thr1378 is subject to Phosphothreonine. A Glycyl lysine isopeptide (Lys-Gly) (interchain with G-Cter in SUMO2) cross-link involves residue Lys1400. A Glycyl lysine isopeptide (Lys-Gly) (interchain with G-Cter in SUMO2); alternate cross-link involves residue Lys1423. Lys1423 bears the N6-acetyllysine; alternate mark. The interval 1450-1544 (GEPVRARHTS…SIPAKSPVPG (95 aa)) is disordered. Phosphoserine occurs at positions 1459 and 1481. The span at 1459–1469 (SVVSSGPSVLR) shows a compositional bias: polar residues. The span at 1495-1514 (VSYQNTISRGSPMMNRTSDV) shows a compositional bias: polar residues. Residues 1510-2453 (RTSDVSSSKS…QYETLSDSDD (944 aa)) are interaction with C1D. Lys1525 is covalently cross-linked (Glycyl lysine isopeptide (Lys-Gly) (interchain with G-Cter in SUMO2)). The residue at position 1598 (Ser1598) is a Phosphoserine. Disordered stretches follow at residues 1697 to 1780 (RPYN…VRTQ) and 1902 to 1939 (ALPS…RTRG). Composition is skewed to basic and acidic residues over residues 1718 to 1745 (AERE…RERI) and 1919 to 1937 (AGKD…ELRT). Positions 1949–1953 (IDVII) match the CORNR box 1 motif. The tract at residues 1959–2060 (SDKDARERGS…SSQSEGMGQV (102 aa)) is disordered. A compositionally biased stretch (low complexity) spans 1968–1979 (SQSSDSSSSLSS). Phosphoserine is present on residues Ser1993 and Ser1997. Residues 2050 to 2129 (PSSQSEGMGQ…QSQTVLHPRP (80 aa)) form an ID1 region. The segment at 2065-2068 (RLIT) is required for interaction with RARA in the absence of its ligand. Residues 2073–2077 (ICQII) carry the CORNR box 2 motif. The span at 2088-2124 (SQASTSTFQTSPSALSSTPVRTKTSSRYSPESQSQTV) shows a compositional bias: polar residues. A disordered region spans residues 2088–2174 (SQASTSTFQT…SPPQGPAVHE (87 aa)). Residues Ser2116, Ser2134, Ser2150, Ser2165, and Ser2198 each carry the phosphoserine modification. The segment covering 2138-2156 (LVDKSRGSRPGKSPERSHI) has biased composition (basic and acidic residues). Residues 2226–2287 (IFRKLNSSGG…EDIIRKALMG (62 aa)) are ID2. Positions 2277–2281 (LEDII) match the CORNR box 3 motif. Residues 2303-2396 (PVGIMPGSAS…RPSSTGSTQF (94 aa)) form a disordered region. Low complexity predominate over residues 2310–2319 (SASTSVVTSS). Phosphothreonine is present on Thr2412. Phosphoserine occurs at positions 2449 and 2451.

The protein belongs to the N-CoR nuclear receptor corepressors family. As to quaternary structure, forms a large corepressor complex that contains SIN3A/B and histone deacetylases HDAC1 and HDAC2. This complex associates with the thyroid receptor (TR) and the retinoid acid receptor (RAR) in the absence of ligand. Interacts directly with RARA; the interaction is facilitated with RARA trimethylation. Component of the N-Cor repressor complex, at least composed of CBFA2T3, HEXIM1, NCOR1, NCOR2, HDAC3, TBL1X, TBL1XR1, CORO2A and GPS2. Interacts with ZBTB33; the interaction serves to recruit the N-CoR complex to promoter regions containing methylated CpG dinucleotides. Interacts with TRIM28 and KDM3A. Interacts (via the RD1 domain) with BAZ1A (via its N-terminal); the interaction corepresses a number of NCOR1-regulated genes. Interacts with BCL6, C1D, DACH1, HEXIM1, HDAC7, RORA, RORC, SAP30, SIAH2, SIN3A and SIN3B. May interact with DEAF1. Interacts with RXRA. Interacts with SETD5. Interacts with VDR. Interacts with ZBTB7A. Interacts with AR. Interacts with HDAC3. In terms of processing, ubiquitinated; mediated by SIAH2 and leading to its subsequent proteasomal degradation. Ubiquitous.

It localises to the nucleus. Its function is as follows. Mediates transcriptional repression by certain nuclear receptors. Part of a complex which promotes histone deacetylation and the formation of repressive chromatin structures which may impede the access of basal transcription factors. Participates in the transcriptional repressor activity produced by BCL6. Recruited by ZBTB7A to the androgen response elements/ARE on target genes, negatively regulates androgen receptor signaling and androgen-induced cell proliferation. Mediates the NR1D1-dependent repression and circadian regulation of TSHB expression. The NCOR1-HDAC3 complex regulates the circadian expression of the core clock gene ARTNL/BMAL1 and the genes involved in lipid metabolism in the liver. The protein is Nuclear receptor corepressor 1 (Ncor1) of Mus musculus (Mouse).